Here is a 630-residue protein sequence, read N- to C-terminus: Lysophospholipase 3 (630 aa).

The first 16 residues, 1–16 (MKALLSLLTAVAVATA), serve as a signal peptide directing secretion. Residues 39-587 (SCPATRPSIR…KEYCWNGTVD (549 aa)) enclose the PLA2c domain. N-linked (GlcNAc...) asparagine glycans are attached at residues asparagine 56, asparagine 95, asparagine 164, asparagine 220, asparagine 283, asparagine 351, asparagine 390, asparagine 443, asparagine 456, asparagine 462, asparagine 493, asparagine 514, asparagine 542, asparagine 566, and asparagine 583. Asparagine 606 is lipidated: GPI-like-anchor amidated asparagine. Residues 607-630 (AAYTQGVTWLVGILAVGVAMGMTA) constitute a propeptide, removed in mature form.

The protein belongs to the lysophospholipase family. The GPI-like anchor contains a phosphoceramide lipid group.

Its subcellular location is the cell membrane. The enzyme catalyses a 1-acyl-sn-glycero-3-phosphocholine + H2O = sn-glycerol 3-phosphocholine + a fatty acid + H(+). Its function is as follows. Catalyzes the release of fatty acids from lysophospholipids. This Aspergillus fumigatus (strain CBS 144.89 / FGSC A1163 / CEA10) (Neosartorya fumigata) protein is Lysophospholipase 3 (plb3).